We begin with the raw amino-acid sequence, 271 residues long: MTIKEELGQPQSHSIELDEVSKEAASTRAALTSNLSGRFDQYPTKKGDFAIDGYLLDYSSPKQGCWVDGITVYGDIYIGKQNWGTYTRPVFAYLQYVETISIPQNVTTTLSYQLTKGHTRSFETSVNAKYSVGANIDIVNVGSEISTGFTRSESWSTTQSFTDTTEMKGPGTFVIYQVVLVYAHNATSAGRQNANAFAYSKTQAVGSRVDLYYLSAITQRKRVIVPSSNAVTPLDWDTVQRNVLMENYNPGSNSGHFSFDWSAYNDPHRRY.

The propeptide occupies 1 to 33 (MTIKEELGQPQSHSIELDEVSKEAASTRAALTS). A pore-forming domain region spans residues 102–170 (IPQNVTTTLS…FTDTTEMKGP (69 aa)).

Pro-Monalysin forms a stable donut-like 18-mer complex composed of two disk-shaped nonamers held together by N-terminal swapping of the pro-peptides. After proteolytic cleavage, the inactive 18-mer complex probably dissociates into two disk-shaped active nonamers in which the transmembrane segments are unmasked and ready to engage the conformational change leading to the pore formation into the target membrane. Multimerizes into circular-like structures and barrel-like aggregates. Post-translationally, requires N-terminal cleavage to become fully active. The metalloprotease AprA can induce the rapid cleavage of pro-Monalysin into its active form. Can also be processed by trypsin.

Its subcellular location is the secreted. It is found in the host cell membrane. Pore-forming toxin that contributes to the virulence of P.entomophila against Drosophila, playing an important role in host intestinal damage and lethality. Displays cytolytic and hemolytic activity. The chain is Monalysin from Pseudomonas entomophila (strain L48).